We begin with the raw amino-acid sequence, 257 residues long: MSSAPNGRKKRPSRSTRSSIFQISKPPLQSGDWERRGSGSESAHKTQRALDDCKMLVQEFNTQVALYRELVISIGDVSVSCPSLRAEMHKTRTKGCEMARQAHQKLAAISGPEDGEIHPEICRLYIQLQCCLEMYTTEMLKSICLLGSLQFHRKGKEASGGAKNLDSKIEENAETPALEDSLSSPLESQQQCWQVATDIENTERDMREMKNLLSKLRETMPLPLKNQDDSSLLNLTPYPMVRRRKRRFFGLCCLVSS.

The tract at residues 1–45 (MSSAPNGRKKRPSRSTRSSIFQISKPPLQSGDWERRGSGSESAHK) is disordered. Basic and acidic residues predominate over residues 32–45 (DWERRGSGSESAHK). Residues 242–247 (RRRKRR) carry the Nuclear localization signal motif. S-palmitoyl cysteine attachment occurs at residues Cys252 and Cys253.

The protein belongs to the RGS7BP/RGS9BP family. In terms of assembly, interacts with 'R7' family proteins RGS6, RGS7, RGS9 and RGS11. Component of some R7-Gbeta5 complex composed of some R7 protein (RGS6, RGS7, RGS9 or RGS11), Gbeta5 (GNB5) and RGS7BP. Palmitoylated. Undergoes rapid palmitoylation turnover. De novo and turnover palmitoylation are both mediated by ZDHHC2. Palmitoylation regulates the cell membrane and nuclear shuttling and the regulation of GPCR signaling. Upon depalmitoylation, it is targeted from the plasma membrane into the nucleus. GPCR signaling inhibits depalmitoylation and promotes localization to the plasma membrane. Specifically expressed in the central nervous system including the retina but not in other non-neuronal tissues (at protein level).

The protein resides in the nucleus. It localises to the cytoplasm. It is found in the cell membrane. Regulator of G protein-coupled receptor (GPCR) signaling. Regulatory subunit of the R7-Gbeta5 complexes that acts by controlling the subcellular location of the R7-Gbeta5 complexes. When palmitoylated, it targets the R7-Gbeta5 complexes to the plasma membrane, leading to inhibit G protein alpha subunits. When it is unpalmitoylated, the R7-Gbeta5 complexes undergo a nuclear/cytoplasmic shuttling. May also act by controlling the proteolytic stability of R7 proteins, probably by protecting them from degradation. In Mus musculus (Mouse), this protein is Regulator of G-protein signaling 7-binding protein (Rgs7bp).